Reading from the N-terminus, the 448-residue chain is ATP-dependent protease ATPase subunit HslU (448 aa).

Residues Val-21, 63 to 68, Asp-260, Glu-326, and Arg-398 each bind ATP; that span reads GVGKTE.

It belongs to the ClpX chaperone family. HslU subfamily. As to quaternary structure, a double ring-shaped homohexamer of HslV is capped on each side by a ring-shaped HslU homohexamer. The assembly of the HslU/HslV complex is dependent on binding of ATP.

It is found in the cytoplasm. ATPase subunit of a proteasome-like degradation complex; this subunit has chaperone activity. The binding of ATP and its subsequent hydrolysis by HslU are essential for unfolding of protein substrates subsequently hydrolyzed by HslV. HslU recognizes the N-terminal part of its protein substrates and unfolds these before they are guided to HslV for hydrolysis. This is ATP-dependent protease ATPase subunit HslU from Sulfurihydrogenibium sp. (strain YO3AOP1).